A 294-amino-acid chain; its full sequence is HTH-type transcriptional regulator DgdR (294 aa).

The region spanning 14–70 is the HTH lysR-type domain; sequence LEIDLLRSFVVIAEVRALSRAAARVGRTQSALSQQMKRLEDIVDQPLFQRTGRGVVL. The H-T-H motif DNA-binding region spans 31–50; it reads LSRAAARVGRTQSALSQQMK.

It belongs to the LysR transcriptional regulatory family.

The protein is HTH-type transcriptional regulator DgdR (dgdR) of Burkholderia cepacia (Pseudomonas cepacia).